The chain runs to 458 residues: UDP-N-acetylmuramoylalanine--D-glutamate ligase (458 aa).

124 to 130 contributes to the ATP binding site; the sequence is GSDGKTT.

The protein belongs to the MurCDEF family.

The protein resides in the cytoplasm. The enzyme catalyses UDP-N-acetyl-alpha-D-muramoyl-L-alanine + D-glutamate + ATP = UDP-N-acetyl-alpha-D-muramoyl-L-alanyl-D-glutamate + ADP + phosphate + H(+). It participates in cell wall biogenesis; peptidoglycan biosynthesis. Functionally, cell wall formation. Catalyzes the addition of glutamate to the nucleotide precursor UDP-N-acetylmuramoyl-L-alanine (UMA). The polypeptide is UDP-N-acetylmuramoylalanine--D-glutamate ligase (Clostridium kluyveri (strain NBRC 12016)).